Here is a 518-residue protein sequence, read N- to C-terminus: D-aminopeptidase (518 aa).

Ser-62 serves as the catalytic Nucleophile. The active-site Proton donor/acceptor is the Lys-65. The tract at residues 477-487 (QRSMDAPSPGE) is important for specificity. Asp-481 serves as a coordination point for substrate.

The protein belongs to the peptidase S12 family. In terms of assembly, homodimer.

It catalyses the reaction Release of an N-terminal D-amino acid from a peptide, Xaa-|-Yaa-, in which Xaa is preferably D-Ala, D-Ser or D-Thr. D-amino acid amides and methyl esters also are hydrolyzed, as is glycine amide.. Inhibited by beta-lactam compounds such as 6-aminopenicillic acid, 7-aminocephalosporanic acid, benzylpenicillin and ampicillin. Inhibited by p-chloromercuribenzoate. Hydrolyzes N-terminal residues in D-amino acid-containing peptides. The polypeptide is D-aminopeptidase (Brucella abortus (strain S19)).